A 179-amino-acid chain; its full sequence is Adenine phosphoribosyltransferase (179 aa).

This sequence belongs to the purine/pyrimidine phosphoribosyltransferase family. As to quaternary structure, homodimer.

It localises to the cytoplasm. The catalysed reaction is AMP + diphosphate = 5-phospho-alpha-D-ribose 1-diphosphate + adenine. Its pathway is purine metabolism; AMP biosynthesis via salvage pathway; AMP from adenine: step 1/1. Its function is as follows. Catalyzes a salvage reaction resulting in the formation of AMP, that is energically less costly than de novo synthesis. This Gluconobacter oxydans (strain 621H) (Gluconobacter suboxydans) protein is Adenine phosphoribosyltransferase.